The chain runs to 140 residues: FAD synthase (140 aa).

Residues 10–11, 15–18, and Asn93 each bind ATP; these read TF and HPGH.

This sequence belongs to the archaeal FAD synthase family. Homodimer. The cofactor is a divalent metal cation.

It carries out the reaction FMN + ATP + H(+) = FAD + diphosphate. It functions in the pathway cofactor biosynthesis; FAD biosynthesis; FAD from FMN: step 1/1. Catalyzes the transfer of the AMP portion of ATP to flavin mononucleotide (FMN) to produce flavin adenine dinucleotide (FAD) coenzyme. The protein is FAD synthase of Methanocella arvoryzae (strain DSM 22066 / NBRC 105507 / MRE50).